Consider the following 226-residue polypeptide: Glutathione peroxidase 3 (226 aa).

Positions 1–24 (MARLLQASCLLSLLLAGFLPQSRG) are cleaved as a signal peptide. U73 is a catalytic residue. Residue U73 is a non-standard amino acid, selenocysteine.

Belongs to the glutathione peroxidase family. As to quaternary structure, homotetramer. As to expression, secreted in plasma.

It localises to the secreted. It catalyses the reaction 2 glutathione + H2O2 = glutathione disulfide + 2 H2O. The enzyme catalyses tert-butyl hydroperoxide + 2 glutathione = tert-butanol + glutathione disulfide + H2O. Protects cells and enzymes from oxidative damage, by catalyzing the reduction of hydrogen peroxide, lipid peroxides and organic hydroperoxide, by glutathione. This is Glutathione peroxidase 3 from Sapajus apella (Brown-capped capuchin).